We begin with the raw amino-acid sequence, 180 residues long: Hypoxanthine-guanine phosphoribosyltransferase (180 aa).

Positions 43 and 44 each coordinate diphosphate. Glutamate 99 and aspartate 100 together coordinate Mg(2+). The Proton acceptor role is filled by aspartate 103. GMP is bound by residues lysine 131, 152-153, and aspartate 159; that span reads FV. Arginine 165 lines the diphosphate pocket.

This sequence belongs to the purine/pyrimidine phosphoribosyltransferase family. The cofactor is Mg(2+).

It localises to the cytoplasm. It catalyses the reaction IMP + diphosphate = hypoxanthine + 5-phospho-alpha-D-ribose 1-diphosphate. The enzyme catalyses GMP + diphosphate = guanine + 5-phospho-alpha-D-ribose 1-diphosphate. The protein operates within purine metabolism; IMP biosynthesis via salvage pathway; IMP from hypoxanthine: step 1/1. It participates in purine metabolism; GMP biosynthesis via salvage pathway; GMP from guanine: step 1/1. In terms of biological role, purine salvage pathway enzyme that catalyzes the transfer of the ribosyl-5-phosphate group from 5-phospho-alpha-D-ribose 1-diphosphate (PRPP) to the N9 position of the 6-oxopurines hypoxanthine and guanine to form the corresponding ribonucleotides IMP (inosine 5'-monophosphate) and GMP (guanosine 5'-monophosphate), with the release of PPi. This chain is Hypoxanthine-guanine phosphoribosyltransferase (hprT), found in Bacillus subtilis (strain 168).